Here is a 207-residue protein sequence, read N- to C-terminus: MIRIAIPTGRMLEQTLDFLRNFDKKLLDEEKGRKLRIRGERFEVFLAKPWDLPLYVEERVVDLGIIGRDVILEQERNLVNLLSLPFGYCKMVIAGYPHISLEKNGKEIKIATKYENIARKFLEDKWSKIKVIKLNGSVELGPILNISDFIVDIVETGKTLKENGLEIKEVLFESSACLVSNVASFVYLRDEILSFVKEVRKLNDKCN.

It belongs to the ATP phosphoribosyltransferase family. Short subfamily. Heteromultimer composed of HisG and HisZ subunits.

It is found in the cytoplasm. The catalysed reaction is 1-(5-phospho-beta-D-ribosyl)-ATP + diphosphate = 5-phospho-alpha-D-ribose 1-diphosphate + ATP. It functions in the pathway amino-acid biosynthesis; L-histidine biosynthesis; L-histidine from 5-phospho-alpha-D-ribose 1-diphosphate: step 1/9. Catalyzes the condensation of ATP and 5-phosphoribose 1-diphosphate to form N'-(5'-phosphoribosyl)-ATP (PR-ATP). Has a crucial role in the pathway because the rate of histidine biosynthesis seems to be controlled primarily by regulation of HisG enzymatic activity. In Dictyoglomus thermophilum (strain ATCC 35947 / DSM 3960 / H-6-12), this protein is ATP phosphoribosyltransferase.